We begin with the raw amino-acid sequence, 75 residues long: CLAVATA3/ESR (CLE)-related protein 33 (75 aa).

Positions 1–22 are cleaved as a signal peptide; that stretch reads MASWRMLCFVLLFTSILICHDA. A hydroxyproline mark is found at Pro67 and Pro70. Pro70 is a glycosylation site (O-linked (Ara...) hydroxyproline).

The protein belongs to the CLV3/ESR signal peptide family. The O-glycosylation (arabinosylation) of the hydroxyproline Pro-70 enhances binding affinity of the CLE33p peptide for its receptor. In terms of tissue distribution, expressed in root vasculature.

It localises to the secreted. The protein localises to the extracellular space. Functionally, signaling peptide involved in the regulation of root colonization by arbuscular mycorrhizal (AM) fungi. Moves from root to shoot to function with the receptor kinase SUNN, in a signaling pathway that repress strigolactone biosynthetic genes and strigolactone content in the roots, and consequently reduces the promotion of further colonization by AM fungi. In Medicago truncatula (Barrel medic), this protein is CLAVATA3/ESR (CLE)-related protein 33.